Reading from the N-terminus, the 273-residue chain is MTVRKNQATLTADEKRRFVTAVLSSSAARYDTFVTTHNEFIVADTDNGERTGHRSPSFLPWHRRFLLEFERALQSVDASVALPYWDWSTDRSARSSLWAPDFLGGTGRSRNGRVTDGPFRAATGVWPITVRLDGRTYLRRALGGAGRELPTRAEVDSVLSIPTYDMAPWNSASDGFRNHLEGWRGVNLHNRVHVWVGGQMATGVSPNDPVFWLHHAYIDKLWAQWQRRHRTPAYVPAAGTPDVVDLDETMKPWHDSSPADLLDHTGHYTFDTD.

H37, H53, H62, H189, H193, and H215 together coordinate Cu cation.

This sequence belongs to the tyrosinase family. Cu(2+) serves as cofactor.

It carries out the reaction 2 L-dopa + O2 = 2 L-dopaquinone + 2 H2O. The catalysed reaction is L-tyrosine + O2 = L-dopaquinone + H2O. In terms of biological role, this is a copper-containing oxidase that functions in the formation of pigments such as melanins and other polyphenolic compounds. This is Tyrosinase (melC2) from Streptomyces lincolnensis.